Reading from the N-terminus, the 919-residue chain is Isoleucine--tRNA ligase (919 aa).

The short motif at 57 to 67 (PYANGHIHIGT) is the 'HIGH' region element. Glu553 contacts L-isoleucyl-5'-AMP. The 'KMSKS' region motif lies at 594 to 598 (KMSKS). Residue Lys597 participates in ATP binding. Residues Cys887, Cys890, Cys907, and Cys910 each coordinate Zn(2+).

The protein belongs to the class-I aminoacyl-tRNA synthetase family. IleS type 1 subfamily. Monomer. Zn(2+) is required as a cofactor.

It is found in the cytoplasm. It catalyses the reaction tRNA(Ile) + L-isoleucine + ATP = L-isoleucyl-tRNA(Ile) + AMP + diphosphate. Its function is as follows. Catalyzes the attachment of isoleucine to tRNA(Ile). As IleRS can inadvertently accommodate and process structurally similar amino acids such as valine, to avoid such errors it has two additional distinct tRNA(Ile)-dependent editing activities. One activity is designated as 'pretransfer' editing and involves the hydrolysis of activated Val-AMP. The other activity is designated 'posttransfer' editing and involves deacylation of mischarged Val-tRNA(Ile). The sequence is that of Isoleucine--tRNA ligase from Thermotoga petrophila (strain ATCC BAA-488 / DSM 13995 / JCM 10881 / RKU-1).